Consider the following 431-residue polypeptide: Dual-specificity RNA methyltransferase RlmN (431 aa).

The interval 1 to 26 is disordered; it reads MATASLDTARPERRAGSDPFIEKTPE. A compositionally biased stretch (basic and acidic residues) spans 9–26; the sequence is ARPERRAGSDPFIEKTPE. E138 serves as the catalytic Proton acceptor. In terms of domain architecture, Radical SAM core spans 144-394; the sequence is ANDRGTLCVS…VRTPRGRDIL (251 aa). C151 and C397 are disulfide-bonded. [4Fe-4S] cluster-binding residues include C158, C162, and C165. S-adenosyl-L-methionine is bound by residues 223-224, S255, 277-279, and N354; these read GE and SLH. C397 functions as the S-methylcysteine intermediate in the catalytic mechanism.

The protein belongs to the radical SAM superfamily. RlmN family. It depends on [4Fe-4S] cluster as a cofactor.

It is found in the cytoplasm. The catalysed reaction is adenosine(2503) in 23S rRNA + 2 reduced [2Fe-2S]-[ferredoxin] + 2 S-adenosyl-L-methionine = 2-methyladenosine(2503) in 23S rRNA + 5'-deoxyadenosine + L-methionine + 2 oxidized [2Fe-2S]-[ferredoxin] + S-adenosyl-L-homocysteine. It catalyses the reaction adenosine(37) in tRNA + 2 reduced [2Fe-2S]-[ferredoxin] + 2 S-adenosyl-L-methionine = 2-methyladenosine(37) in tRNA + 5'-deoxyadenosine + L-methionine + 2 oxidized [2Fe-2S]-[ferredoxin] + S-adenosyl-L-homocysteine. In terms of biological role, specifically methylates position 2 of adenine 2503 in 23S rRNA and position 2 of adenine 37 in tRNAs. m2A2503 modification seems to play a crucial role in the proofreading step occurring at the peptidyl transferase center and thus would serve to optimize ribosomal fidelity. This is Dual-specificity RNA methyltransferase RlmN from Methylobacterium sp. (strain 4-46).